We begin with the raw amino-acid sequence, 473 residues long: Calcium uptake protein 1, mitochondrial (473 aa).

Residues 1-33 constitute a mitochondrion transit peptide; it reads MFRLRFIPAVAGLAAVSRRYHGVANHARSRRRL. The tract at residues 61-101 is disordered; sequence SSVKHSMREETSEKEKEDADQAVESSDEDQPQEGKKKKARV. Residues 66 to 79 are compositionally biased toward basic and acidic residues; sequence SMREETSEKEKEDA. A compositionally biased stretch (acidic residues) spans 80 to 91; sequence DQAVESSDEDQP. Positions 96–107 are polybasic region; that stretch reads KKKARVGFRDRK. The tract at residues 123 to 126 is k/R-ring; that stretch reads KIFR. The region spanning 215–250 is the EF-hand 1 domain; sequence TPQRNFEIAFKMFDLNGDGEVDMEEFEQVQSIIRSQ. Ca(2+)-binding residues include D228, N230, D232, E234, and E239. Residues 256-260 are k/R-ring; it reads RHRDR. Residues 405–440 enclose the EF-hand 2 domain; sequence LSDHVCDVVFALFDCDGNGELSNKEFIAIMKQRLMR. Ca(2+) contacts are provided by D418, D420, N422, E424, and E429. A C-helix region region spans residues 452 to 462; that stretch reads RLMRAMWKCAQ.

Belongs to the MICU1 family. MICU1 subfamily. Heterodimer; disulfide-linked; heterodimerizes with micu2. Component of the uniplex complex.

Its subcellular location is the mitochondrion intermembrane space. It is found in the mitochondrion inner membrane. Functionally, calcium sensor of the mitochondrial calcium uniporter (mcu) channel, which senses calcium level via its EF-hand domains. micu1 and micu2 form a disulfide-linked heterodimer that stimulates and inhibits MCU activity, depending on the concentration of calcium. At low calcium levels, micu1 occludes the pore of the MCU channel, preventing mitochondrial calcium uptake. At higher calcium levels, calcium-binding to micu1 and micu2 induces a conformational change that weakens mcu-micu1 interactions and moves the micu1-micu2 heterodimer away from the pore, allowing calcium permeation through the mcu channel. Also required to protect against manganese toxicity by preventing manganese uptake by mcu. This chain is Calcium uptake protein 1, mitochondrial (micu1), found in Xenopus tropicalis (Western clawed frog).